A 361-amino-acid polypeptide reads, in one-letter code: Core-capsid bridging protein (361 aa).

Over residues Arg311–Ser321 the composition is skewed to basic residues. Residues Arg311 to Lys331 are disordered.

Belongs to the adenoviridae core-capsid bridging protein family. As to quaternary structure, monomer. Homodimer. Exists in equilibrium between monomers and dimers in solution. Interacts with the histone-like nucleoprotein; this interactions bridge the virus core to the capsid. Interacts with core protein X; this interactions bridge the virus core to the capsid. Interacts with the endosome lysis protein VI; this interactions bridge the virus core to the capsid. Interacts with the peripentonal hexons. Interacts with host NPM1; this interaction might play a role in virus assembly.

The protein resides in the virion. It localises to the host nucleus. Its subcellular location is the host nucleolus. In terms of biological role, associates loosely with the viral DNA to form an outer shell around the nucleoprotein-DNA complex and links it with the capsid by binding the endosome lysis protein. Dissociates from the viral genome during entry. Might be involved in nuclear capsid assembly of the viral particles through its association with NPM1/nucleophosmin. The sequence is that of Core-capsid bridging protein from Bovine adenovirus 2 (BAdV-2).